Reading from the N-terminus, the 635-residue chain is Probable extracellular metalloproteinase 1 (635 aa).

The first 19 residues, 1 to 19 (MHGLLLAAGLLSLPLHVLA), serve as a signal peptide directing secretion. Positions 20 to 246 (HPQPSTSTSL…VHNVVDYVAH (227 aa)) are excised as a propeptide. N-linked (GlcNAc...) asparagine glycosylation is present at Asn-287. His-430 serves as a coordination point for Zn(2+). The active site involves Glu-431. His-434 serves as a coordination point for Zn(2+). Residues Asn-475, Asn-594, and Asn-623 are each glycosylated (N-linked (GlcNAc...) asparagine).

This sequence belongs to the peptidase M36 family. Requires Zn(2+) as cofactor.

Its subcellular location is the secreted. In terms of biological role, secreted metalloproteinase probably acting as a virulence factor. This chain is Probable extracellular metalloproteinase 1 (MEP1), found in Trichophyton verrucosum (strain HKI 0517).